The chain runs to 1010 residues: BrkA autotransporter (1010 aa).

The signal sequence occupies residues 1–42 (MYLDRFRQCPSSLQIPRSAWRLHALAAALALAGMARLAPAAA). The 269-residue stretch at 742-1010 (LRADAGGPWA…SFHAGYRYSF (269 aa)) folds into the Autotransporter domain.

The protein resides in the periplasm. Its subcellular location is the secreted. The protein localises to the cell surface. It localises to the cell outer membrane. Functionally, inhibits the classical pathway of complement activation and prevents accumulation of deposited C4. In Bordetella pertussis (strain Tohama I / ATCC BAA-589 / NCTC 13251), this protein is BrkA autotransporter.